A 304-amino-acid chain; its full sequence is D-alanine--D-alanine ligase (304 aa).

The ATP-grasp domain maps to 107–300; sequence KRLWQGSGLP…FDELVARILG (194 aa). 134–186 provides a ligand contact to ATP; that stretch reads VGYPVIVKPAREGSSLGMSRVEGPEELAEAYRVAAAYDDTVLAEAWVEGEEYT. Residues Asp-254, Glu-267, and Asn-269 each coordinate Mg(2+).

The protein belongs to the D-alanine--D-alanine ligase family. The cofactor is Mg(2+). It depends on Mn(2+) as a cofactor.

It localises to the cytoplasm. It catalyses the reaction 2 D-alanine + ATP = D-alanyl-D-alanine + ADP + phosphate + H(+). The protein operates within cell wall biogenesis; peptidoglycan biosynthesis. Its function is as follows. Cell wall formation. The chain is D-alanine--D-alanine ligase from Halorhodospira halophila (strain DSM 244 / SL1) (Ectothiorhodospira halophila (strain DSM 244 / SL1)).